Here is a 71-residue protein sequence, read N- to C-terminus: Small ribosomal subunit protein bS21 (71 aa).

Residues 50–59 (AAAVKRHAKK) show a composition bias toward basic residues. The segment at 50–71 (AAAVKRHAKKVQREQRRAVRLY) is disordered. Over residues 60 to 71 (VQREQRRAVRLY) the composition is skewed to basic and acidic residues.

The protein belongs to the bacterial ribosomal protein bS21 family.

This is Small ribosomal subunit protein bS21 from Pseudomonas fluorescens (strain ATCC BAA-477 / NRRL B-23932 / Pf-5).